We begin with the raw amino-acid sequence, 92 residues long: Protein S100-A6 (92 aa).

EF-hand domains follow at residues 12–47 and 48–83; these read LVAI…IGAE and LEDS…LAMI. Ca(2+)-binding residues include T28 and E33. The residue at position 40 (K40) is an N6-acetyllysine. Residues D61, N63, D65, and E72 each contribute to the Ca(2+) site.

This sequence belongs to the S-100 family. Homodimer; head to tail assembly of 2 subunits. Interacts with CACYBP in a calcium-dependent manner. Interacts with ANXA2 and ANXA11 (via N-terminus). Interacts with SUGT1. Interacts with TP53; has higher affinity for TP53 that is phosphorylated on its N-terminal domain, and lower affinity for TP53 that is phosphorylated on its C-terminal domain. Interacts with tropomyosin. Interacts with FKBP4. Interacts with PPP5C (via TPR repeats); the interaction is calcium-dependent and modulates PPP5C activity. Interacts with TPPP; this interaction inhibits TPPP dimerization.

It is found in the nucleus envelope. Its subcellular location is the cytoplasm. The protein resides in the cell membrane. Its function is as follows. May function as calcium sensor and modulator, contributing to cellular calcium signaling. May function by interacting with other proteins, such as TPR-containing proteins, and indirectly play a role in many physiological processes such as the reorganization of the actin cytoskeleton and in cell motility. Binds 2 calcium ions. Calcium binding is cooperative. The polypeptide is Protein S100-A6 (S100A6) (Equus caballus (Horse)).